A 125-amino-acid polypeptide reads, in one-letter code: uncharacterized protein (125 aa).

The region spanning 15–121 is the PRD domain; the sequence is QINQSIIDVI…HSLVLEQKQL (107 aa).

This is an uncharacterized protein from Haemophilus influenzae (strain ATCC 51907 / DSM 11121 / KW20 / Rd).